A 402-amino-acid polypeptide reads, in one-letter code: Phosphomevalonate dehydratase large subunit (402 aa).

Residues G48, A49, S50, N79, and P80 each coordinate (R)-5-phosphomevalonate. C122 is a [4Fe-4S] cluster binding site. (R)-5-phosphomevalonate is bound by residues E145 and S146. Positions 297 and 356 each coordinate [4Fe-4S] cluster. K377 provides a ligand contact to (R)-5-phosphomevalonate.

The protein belongs to the AcnX type II large subunit family. As to quaternary structure, heterodimer composed of a large subunit (PMDh-L) and a small subunit (PMDh-S). [4Fe-4S] cluster serves as cofactor.

It carries out the reaction (R)-5-phosphomevalonate = (2E)-3-methyl-5-phosphooxypent-2-enoate + H2O. Its pathway is isoprenoid biosynthesis; isopentenyl diphosphate biosynthesis via mevalonate pathway. With respect to regulation, neither the addition of 1 mM Mg(2+) nor 1 mM Mn(2+) has a significant effect on the activity, whereas Zn(2+) causes almost complete inactivation. Strongly inhibited by H(2)O(2), but not by EDTA or iodoacetamide. In terms of biological role, component of a hydro-lyase that catalyzes the dehydration of mevalonate 5-phosphate (MVA5P) to form trans-anhydromevalonate 5-phosphate (tAHMP). Involved in the archaeal mevalonate (MVA) pathway, which provides fundamental precursors for isoprenoid biosynthesis, such as isopentenyl diphosphate (IPP) and dimethylallyl diphosphate (DMAPP). In Aeropyrum pernix (strain ATCC 700893 / DSM 11879 / JCM 9820 / NBRC 100138 / K1), this protein is Phosphomevalonate dehydratase large subunit.